Reading from the N-terminus, the 411-residue chain is Lissencephaly-1 homolog (411 aa).

The LisH domain occupies 9–41 (QREELNQAIADYLGSNGYSSALEAFRKEADISG). Residues 56-83 (TSVIRLQKKVMELEAKLSEAEKEVIEGA) are a coiled coil. 7 WD repeats span residues 106–147 (GHRA…RSLK), 149–187 (HTSS…DCVK), 191–230 (GHDH…CVKT), 233–272 (GHRE…CKAE), 275–334 (AHDH…CLFV), 337–376 (GHDN…FMKT), and 379–411 (AHQH…WECR).

The protein belongs to the WD repeat LIS1/nudF family.

It localises to the cytoplasm. The protein localises to the cytoskeleton. The protein resides in the microtubule organizing center. Its subcellular location is the centrosome. Its function is as follows. Positively regulates the activity of the minus-end directed microtubule motor protein dynein. May enhance dynein-mediated microtubule sliding by targeting dynein to the microtubule plus end. Required for several dynein- and microtubule-dependent processes. The protein is Lissencephaly-1 homolog of Glossina morsitans morsitans (Savannah tsetse fly).